We begin with the raw amino-acid sequence, 62 residues long: Large ribosomal subunit protein uL29 (62 aa).

It belongs to the universal ribosomal protein uL29 family.

This is Large ribosomal subunit protein uL29 from Ruthia magnifica subsp. Calyptogena magnifica.